The chain runs to 54 residues: Relaxin (54 aa).

A Pyrrolidone carboxylic acid modification is found at Q1. 3 disulfides stabilise this stretch: C13/C41, C25/C54, and C40/C45.

It belongs to the insulin family. Heterodimer of a B chain and an A chain linked by two disulfide bonds.

The protein resides in the secreted. In terms of biological role, the function of relaxin in an oviparous species is not yet known. The protein is Relaxin of Squalus acanthias (Spiny dogfish).